The following is a 547-amino-acid chain: Germacrene A synthase (547 aa).

Positions 300, 304, 443, and 451 each coordinate Mg(2+). The DDXXD motif signature appears at 300–304 (DDTYD).

This sequence belongs to the terpene synthase family. Tpsa subfamily. Mg(2+) serves as cofactor. Mn(2+) is required as a cofactor. As to expression, expressed in leaves.

The protein localises to the plastid. Its subcellular location is the chloroplast. The enzyme catalyses (2E,6E)-farnesyl diphosphate = germacrene A + diphosphate. It catalyses the reaction (2E,6E)-farnesyl diphosphate = (1S,2S,4R)-beta-elemene + diphosphate. The protein operates within secondary metabolite biosynthesis; terpenoid biosynthesis. Its function is as follows. Sesquiterpene synthase involved in the biosynthesis of volatile compounds widely used in aromatherapy and folk medicine, and present in culinary herbs. Mediates the conversion of (2E,6E)-farnesyl diphosphate (FPP) into germacrene A and beta-elemene. Not able to use (2E)-geranyl diphosphate (GPP) as substrate. The chain is Germacrene A synthase from Lavandula pedunculata subsp. lusitanica (French lavender).